The chain runs to 355 residues: MEKVGRRVFLGMGAAATAYVTHHLWNQNAESSYAQQSSGGVINVYSARHYDTDKALYNTFTQQTGIRVNIIEAEADALIERIRSEGSRTPADVLITVDAGRLWRAQEAGILQPIQSRVLNSVVPANLREPQGHWFGLSRRVRVLIYNKSRVNPSQLSTYEDLANPKWRRQILTRSSSNIYNQSLTGSLLAIHGAQKTEQWARGLVQNFARPPEGNDTAQIRACAEGVGSVAIANHYYLARLIASDKEQDRAVAAKVGLFFPNQRDRGAHVNISGAGVVAGAPNRQGAIRFLEYLVSPKAQEMFAMANFEYPVRAGVPVHPIVKQFGNFRGQNVNAAVFGRNNAEALRIMDRAGWR.

Positions 1–34 (MEKVGRRVFLGMGAAATAYVTHHLWNQNAESSYA) form a signal peptide, tat-type signal. Fe cation contacts are provided by H49, Y50, Y180, Y236, and Y237.

It belongs to the bacterial solute-binding protein 1 family. Post-translationally, predicted to be exported by the Tat system. The position of the signal peptide cleavage has not been experimentally proven.

Its subcellular location is the cellular thylakoid membrane. In terms of biological role, plays an important role in protecting the acceptor side of photosystem II (PSII) against oxidative damage, especially under iron-limiting growth conditions. May also be part of a periplasmic ABC transporter complex involved in iron import. This is Iron deficiency-induced protein A (idiA) from Thermosynechococcus vestitus (strain NIES-2133 / IAM M-273 / BP-1).